The following is a 69-amino-acid chain: Large ribosomal subunit protein uL29 (69 aa).

The protein belongs to the universal ribosomal protein uL29 family.

This is Large ribosomal subunit protein uL29 from Granulibacter bethesdensis (strain ATCC BAA-1260 / CGDNIH1).